The following is a 236-amino-acid chain: Ribosomal RNA large subunit methyltransferase E (236 aa).

Residues glycine 76, tryptophan 78, aspartate 99, aspartate 115, and aspartate 140 each contribute to the S-adenosyl-L-methionine site. Catalysis depends on lysine 180, which acts as the Proton acceptor.

This sequence belongs to the class I-like SAM-binding methyltransferase superfamily. RNA methyltransferase RlmE family.

Its subcellular location is the cytoplasm. It carries out the reaction uridine(2552) in 23S rRNA + S-adenosyl-L-methionine = 2'-O-methyluridine(2552) in 23S rRNA + S-adenosyl-L-homocysteine + H(+). Its function is as follows. Specifically methylates the uridine in position 2552 of 23S rRNA at the 2'-O position of the ribose in the fully assembled 50S ribosomal subunit. The polypeptide is Ribosomal RNA large subunit methyltransferase E (Rhodopseudomonas palustris (strain HaA2)).